We begin with the raw amino-acid sequence, 307 residues long: Ornithine carbamoyltransferase (307 aa).

Residues 50-53 (STRT), glutamine 77, arginine 101, and 128-131 (HPCQ) each bind carbamoyl phosphate. Residues asparagine 160, aspartate 224, and 228-229 (SM) each bind L-ornithine. Residues 264 to 265 (CL) and arginine 292 contribute to the carbamoyl phosphate site.

Belongs to the aspartate/ornithine carbamoyltransferase superfamily. OTCase family.

The protein localises to the cytoplasm. It catalyses the reaction carbamoyl phosphate + L-ornithine = L-citrulline + phosphate + H(+). The protein operates within amino-acid biosynthesis; L-arginine biosynthesis; L-arginine from L-ornithine and carbamoyl phosphate: step 1/3. Inhibited by arginine, norvaline. Functionally, reversibly catalyzes the transfer of the carbamoyl group from carbamoyl phosphate (CP) to the N(epsilon) atom of ornithine (ORN) to produce L-citrulline, which is a substrate for argininosuccinate synthetase, the enzyme involved in the final step in arginine biosynthesis. The chain is Ornithine carbamoyltransferase from Mycolicibacterium smegmatis (strain ATCC 700084 / mc(2)155) (Mycobacterium smegmatis).